A 562-amino-acid polypeptide reads, in one-letter code: Bacillolysin (562 aa).

The first 24 residues, 1 to 24, serve as a signal peptide directing secretion; sequence MKKKKQALKVLLSVGILSSSFAFA. A propeptide spans 25–245 (activation peptide); sequence HTSSAAPNNV…KQAAKPAAKP (221 aa). Ca(2+)-binding residues include Asp-303, Asp-305, and Asp-384. His-388 is a Zn(2+) binding site. The active site involves Glu-389. His-392 and Glu-412 together coordinate Zn(2+). Ca(2+) contacts are provided by Glu-423, Asn-429, Asp-431, Glu-433, Glu-436, Tyr-439, Thr-440, and Asp-446. Residue His-477 is the Proton donor of the active site.

Belongs to the peptidase M4 family. It depends on Ca(2+) as a cofactor. Requires Zn(2+) as cofactor.

The protein resides in the secreted. It carries out the reaction Similar, but not identical, to that of thermolysin.. In terms of biological role, extracellular zinc metalloprotease. The polypeptide is Bacillolysin (Priestia megaterium (strain ATCC 14581 / DSM 32 / CCUG 1817 / JCM 2506 / NBRC 15308 / NCIMB 9376 / NCTC 10342 / NRRL B-14308 / VKM B-512 / Ford 19) (Bacillus megaterium)).